Here is a 329-residue protein sequence, read N- to C-terminus: GTP 3',8-cyclase (329 aa).

The Radical SAM core domain maps to Ala8–Ala234. Arg17 lines the GTP pocket. Residues Cys24 and Cys28 each coordinate [4Fe-4S] cluster. Tyr30 contributes to the S-adenosyl-L-methionine binding site. A [4Fe-4S] cluster-binding site is contributed by Cys31. A GTP-binding site is contributed by Arg68. Gly72 provides a ligand contact to S-adenosyl-L-methionine. Thr99 is a binding site for GTP. Position 123 (Ser123) interacts with S-adenosyl-L-methionine. Lys160 provides a ligand contact to GTP. Met194 is an S-adenosyl-L-methionine binding site. 2 residues coordinate [4Fe-4S] cluster: Cys257 and Cys260. Arg262 to Arg264 contacts GTP. Cys274 lines the [4Fe-4S] cluster pocket.

The protein belongs to the radical SAM superfamily. MoaA family. As to quaternary structure, monomer and homodimer. It depends on [4Fe-4S] cluster as a cofactor.

It carries out the reaction GTP + AH2 + S-adenosyl-L-methionine = (8S)-3',8-cyclo-7,8-dihydroguanosine 5'-triphosphate + 5'-deoxyadenosine + L-methionine + A + H(+). It participates in cofactor biosynthesis; molybdopterin biosynthesis. Functionally, catalyzes the cyclization of GTP to (8S)-3',8-cyclo-7,8-dihydroguanosine 5'-triphosphate. The chain is GTP 3',8-cyclase from Salmonella dublin (strain CT_02021853).